The primary structure comprises 142 residues: Large ribosomal subunit protein uL16 (142 aa).

It belongs to the universal ribosomal protein uL16 family. Part of the 50S ribosomal subunit.

Binds 23S rRNA and is also seen to make contacts with the A and possibly P site tRNAs. The polypeptide is Large ribosomal subunit protein uL16 (Thermosipho melanesiensis (strain DSM 12029 / CIP 104789 / BI429)).